The primary structure comprises 311 residues: uncharacterized protein (311 aa).

Residues 168 to 188 form a helical membrane-spanning segment; it reads FNVMKGAILGLPIIGGIIVGV.

It is found in the cell membrane. This is an uncharacterized protein from Edwardsiella tarda.